A 332-amino-acid polypeptide reads, in one-letter code: Ferredoxin--NADP reductase 1 (332 aa).

Aspartate 35, lysine 43, phenylalanine 48, valine 88, phenylalanine 123, aspartate 284, and threonine 325 together coordinate FAD.

This sequence belongs to the ferredoxin--NADP reductase type 2 family. In terms of assembly, homodimer. Requires FAD as cofactor.

It catalyses the reaction 2 reduced [2Fe-2S]-[ferredoxin] + NADP(+) + H(+) = 2 oxidized [2Fe-2S]-[ferredoxin] + NADPH. This is Ferredoxin--NADP reductase 1 from Listeria innocua serovar 6a (strain ATCC BAA-680 / CLIP 11262).